We begin with the raw amino-acid sequence, 421 residues long: Structure-specific endonuclease subunit SLX1 (421 aa).

In terms of domain architecture, GIY-YIG spans 13–95 (AFYCCYLLRS…QHTKESRHAE (83 aa)). 2 disordered regions span residues 34–57 (TPEP…KTSS) and 96–120 (VERC…KRAG). The SLX1-type zinc-finger motif lies at 225 to 280 (CGVCKQRLNPRNDMIAICSHSLCRCASHLLCLSAHFLEAAGFIGKLIPKEGTCPAC). The span at 310-322 (RRRTEQVGKRKIS) shows a compositional bias: basic residues. Residues 310-339 (RRRTEQVGKRKISNHVSSEKGESEASMPST) are disordered.

This sequence belongs to the SLX1 family. As to quaternary structure, forms a heterodimer with SLX4. A divalent metal cation is required as a cofactor.

It is found in the nucleus. Its function is as follows. Catalytic subunit of the SLX1-SLX4 structure-specific endonuclease that resolves DNA secondary structures generated during DNA repair and recombination. Has endonuclease activity towards branched DNA substrates, introducing single-strand cuts in duplex DNA close to junctions with ss-DNA. This is Structure-specific endonuclease subunit SLX1 from Ajellomyces capsulatus (strain G186AR / H82 / ATCC MYA-2454 / RMSCC 2432) (Darling's disease fungus).